The sequence spans 299 residues: ATP phosphoribosyltransferase (299 aa).

It belongs to the ATP phosphoribosyltransferase family. Long subfamily. Equilibrium between an active dimeric form, an inactive hexameric form and higher aggregates. Interconversion between the various forms is largely reversible and is influenced by the natural substrates and inhibitors of the enzyme. Mg(2+) is required as a cofactor.

Its subcellular location is the cytoplasm. It carries out the reaction 1-(5-phospho-beta-D-ribosyl)-ATP + diphosphate = 5-phospho-alpha-D-ribose 1-diphosphate + ATP. It participates in amino-acid biosynthesis; L-histidine biosynthesis; L-histidine from 5-phospho-alpha-D-ribose 1-diphosphate: step 1/9. Its activity is regulated as follows. Feedback inhibited by histidine. Its function is as follows. Catalyzes the condensation of ATP and 5-phosphoribose 1-diphosphate to form N'-(5'-phosphoribosyl)-ATP (PR-ATP). Has a crucial role in the pathway because the rate of histidine biosynthesis seems to be controlled primarily by regulation of HisG enzymatic activity. This is ATP phosphoribosyltransferase from Buchnera aphidicola subsp. Schlechtendalia chinensis.